The following is a 457-amino-acid chain: Multidrug resistance protein MdtK (457 aa).

The Cytoplasmic segment spans residues 1 to 10; it reads MQKYISEARL. Residues 11–31 traverse the membrane as a helical segment; that stretch reads LLALAIPVILAQIAQTAMGFV. Over 32–52 the chain is Extracellular; it reads DTVMAGGYSATDMAAVAIGTS. Residues 53–73 form a helical membrane-spanning segment; the sequence is IWLPAILFGHGLLLALTPVIA. Residues 74–92 are Cytoplasmic-facing; it reads QLNGSGRRERIAHQVRQGF. Residues 93–113 form a helical membrane-spanning segment; it reads WLAGFVSVLIMLVLWNAGYII. Over 114–126 the chain is Extracellular; the sequence is RYMENIDPALADK. A helical transmembrane segment spans residues 127–147; it reads AVGYLRALLWGAPGYLFFQVA. Over 148 to 159 the chain is Cytoplasmic; that stretch reads RNQCEGLAKTKP. The helical transmembrane segment at 160–180 threads the bilayer; that stretch reads GMVMGFIGLLVNIPVNYIFIY. The Extracellular portion of the chain corresponds to 181-188; the sequence is GHFGMPEL. A helical transmembrane segment spans residues 189-209; the sequence is GGVGCGVATAAVYWVMFLAMV. The Cytoplasmic portion of the chain corresponds to 210–242; the sequence is SYIKRARSMRDIRNEKGTAKPEPAVMKRLIQLG. Residues 243–263 traverse the membrane as a helical segment; that stretch reads LPIALALFFEVTLFAVVALLV. Residues 264–275 are Extracellular-facing; sequence SPLGIVDVAGHQ. The helical transmembrane segment at 276 to 296 threads the bilayer; it reads IALNFSSLMFVLPMSLAAAVT. Over 297-313 the chain is Cytoplasmic; sequence IRVGYRLGQGSTLDAQT. Residues 314 to 334 traverse the membrane as a helical segment; sequence AARTGLMVGVCMATLTAIFTV. Residues 335-349 lie on the Extracellular side of the membrane; it reads SLREQIALLYNDNPE. The chain crosses the membrane as a helical span at residues 350–370; the sequence is VVTLAAHLMLLAAVYQISDSI. The Cytoplasmic portion of the chain corresponds to 371–386; the sequence is QVIGSGILRGYKDTRS. A helical transmembrane segment spans residues 387–407; that stretch reads IFYITFTAYWVLGLPSGYILA. Residues 408 to 417 lie on the Extracellular side of the membrane; that stretch reads LTDLVVEPMG. The chain crosses the membrane as a helical span at residues 418-438; the sequence is PAGFWIGFIIGLTSAAIMMML. Over 439–457 the chain is Cytoplasmic; it reads RMRFLQRMPSAIILQRASR.

This sequence belongs to the multi antimicrobial extrusion (MATE) (TC 2.A.66.1) family. MdtK subfamily.

The protein resides in the cell inner membrane. Its function is as follows. Multidrug efflux pump that functions probably as a Na(+)/drug antiporter. In Shigella flexneri, this protein is Multidrug resistance protein MdtK (mdtK).